The chain runs to 200 residues: Glycerol-3-phosphate acyltransferase (200 aa).

The next 5 membrane-spanning stretches (helical) occupy residues 2–22, 51–71, 84–104, 114–134, and 159–179; these read FNIPAVAVSYLIGSLSFAVIV, KAAALTLLGDAAKGLVAVLLA, AIAAVALAALVGHMWPVFFGF, LGVLLALSPATALVCALIWLV, and FFMPHVSWVWATVAIALLVLF.

This sequence belongs to the PlsY family. In terms of assembly, probably interacts with PlsX.

The protein resides in the cell inner membrane. It catalyses the reaction an acyl phosphate + sn-glycerol 3-phosphate = a 1-acyl-sn-glycero-3-phosphate + phosphate. The protein operates within lipid metabolism; phospholipid metabolism. Its function is as follows. Catalyzes the transfer of an acyl group from acyl-phosphate (acyl-PO(4)) to glycerol-3-phosphate (G3P) to form lysophosphatidic acid (LPA). This enzyme utilizes acyl-phosphate as fatty acyl donor, but not acyl-CoA or acyl-ACP. The chain is Glycerol-3-phosphate acyltransferase from Neisseria meningitidis serogroup B (strain ATCC BAA-335 / MC58).